The following is a 581-amino-acid chain: Tetratricopeptide repeat and J domain-containing co-chaperone DNJ1 (581 aa).

A signal peptide spans Met1–Ala19. TPR repeat units follow at residues Ala48 to Ser81, Trp82 to Phe115, Asp116 to Lys149, Leu221 to Pro254, Leu257 to Asn293, Leu378 to Asn411, and Val412 to Thr445. The N-linked (GlcNAc...) asparagine glycan is linked to Asn293. The 62-residue stretch at Asp467–Asp528 folds into the J domain. Residues Lys522–Pro544 are disordered.

Interacts with the ER chaperone BIP1.

The protein localises to the endoplasmic reticulum lumen. Functionally, endoplasmic reticulum (ER) protein that functions as a co-chaperone for BIP1 during ER stress. Might be specifically involved in the refolding of N-glycosylated proteins. The sequence is that of Tetratricopeptide repeat and J domain-containing co-chaperone DNJ1 from Mycosarcoma maydis (Corn smut fungus).